The following is a 291-amino-acid chain: Phytanoyl-CoA dioxygenase domain-containing protein 1 (291 aa).

T55 carries the phosphothreonine modification. 2-oxoglutarate is bound by residues K102, M141, 156–158 (HQD), and W174. Residues H156 and D158 each coordinate Fe cation. H246 contacts Fe cation. S248 and R257 together coordinate 2-oxoglutarate.

It belongs to the PhyH family. PHYHD1 subfamily. It depends on Fe cation as a cofactor.

Functionally, 2-oxoglutarate(2OG)-dependent dioxygenase that catalyzes the conversion of 2-oxoglutarate to succinate and CO(2) in an iron-dependent manner. However, does not couple 2OG turnover to the hydroxylation of acyl-coenzyme A derivatives, implying that it is not directly involved in phytanoyl coenzyme-A metabolism. Does not show detectable activity towards fatty acid CoA thioesters. In Mus musculus (Mouse), this protein is Phytanoyl-CoA dioxygenase domain-containing protein 1.